Reading from the N-terminus, the 134-residue chain is Small ribosomal subunit protein uS11 (134 aa).

The protein belongs to the universal ribosomal protein uS11 family. Part of the 30S ribosomal subunit. Interacts with proteins S7 and S18. Binds to IF-3.

Its function is as follows. Located on the platform of the 30S subunit, it bridges several disparate RNA helices of the 16S rRNA. Forms part of the Shine-Dalgarno cleft in the 70S ribosome. This chain is Small ribosomal subunit protein uS11, found in Frankia casuarinae (strain DSM 45818 / CECT 9043 / HFP020203 / CcI3).